The chain runs to 144 residues: Fluoride-specific ion channel FluC 1 (144 aa).

Helical transmembrane passes span 11–31 (LIYI…YYLG), 44–64 (LATL…TTYI), 74–94 (VITG…TFSV), and 107–127 (IAFL…GLGY). 2 residues coordinate Na(+): G84 and T87.

The protein belongs to the fluoride channel Fluc/FEX (TC 1.A.43) family.

It is found in the cell membrane. It catalyses the reaction fluoride(in) = fluoride(out). With respect to regulation, na(+) is not transported, but it plays an essential structural role and its presence is essential for fluoride channel function. Its function is as follows. Fluoride-specific ion channel. Important for reducing fluoride concentration in the cell, thus reducing its toxicity. The chain is Fluoride-specific ion channel FluC 1 from Bacillus cereus (strain ATCC 14579 / DSM 31 / CCUG 7414 / JCM 2152 / NBRC 15305 / NCIMB 9373 / NCTC 2599 / NRRL B-3711).